A 276-amino-acid polypeptide reads, in one-letter code: MADDYRRSVELERRIFELDNKCATLRTEKPDDDYLQNASSILDKLKTYYRHGGESSSLPKLLQDYTQVVLDITFYEENKLVDQEFPEDSSPFKIQQLLQDLTEPEVLAGRLVPAQEVQSVLGLELLECLYWRRGALLYMYCHTLHQRKQWIKKNKATFLKCLQEGVRYLMRMLQVRNSVKLNDGVVFHDSATANFLAEGIFSDTHLLTMMYIGEMCFWAVKYEDCSMDTTERKEDRLHFRDIGTQILHKYVLACEGPLQGQGWNTENAKEILSILQ.

The protein belongs to the RIMOC1 family.

It localises to the cytoplasm. The protein resides in the cytosol. Its function is as follows. Plays an important role in the removal of damaged mitochondria via mitophagy by controlling the stability and localization of RAB7A. Required for the recruitment of RAB7A and ATG9A vesicles to damaged mitochondria and promotes the stability of RAB7A by inhibiting its proteasomal degradation during mitophagy. The polypeptide is RAB7A-interacting MON1-CCZ1 complex subunit 1 (rimoc1) (Danio rerio (Zebrafish)).